Consider the following 481-residue polypeptide: uncharacterized protein (481 aa).

Positions 1-18 (MSRLPSKTKYHSSHRSLN) are enriched in basic residues. A disordered region spans residues 1–37 (MSRLPSKTKYHSSHRSLNRKTPLLQRSSETNSLRESG). Residues 24-34 (LQRSSETNSLR) show a composition bias toward polar residues. 2 consecutive transmembrane segments (helical) span residues 172–191 (SISTLIGTGGGIGITGAGAI) and 195–214 (AAAGIGTAVTVGVLLFYLCW).

The protein resides in the membrane. This is an uncharacterized protein from Coxiella burnetii (strain RSA 493 / Nine Mile phase I).